Reading from the N-terminus, the 252-residue chain is 5-oxoprolinase subunit A (252 aa).

The protein belongs to the LamB/PxpA family. In terms of assembly, forms a complex composed of PxpA, PxpB and PxpC.

The catalysed reaction is 5-oxo-L-proline + ATP + 2 H2O = L-glutamate + ADP + phosphate + H(+). Its function is as follows. Catalyzes the cleavage of 5-oxoproline to form L-glutamate coupled to the hydrolysis of ATP to ADP and inorganic phosphate. This Mycobacterium marinum (strain ATCC BAA-535 / M) protein is 5-oxoprolinase subunit A.